The following is a 170-amino-acid chain: Macro domain-containing protein DR_2288 (170 aa).

One can recognise a Macro domain in the interval 1 to 170 (MPLELVQGDI…HVFERALAQL (170 aa)).

It belongs to the MacroD-type family.

The sequence is that of Macro domain-containing protein DR_2288 from Deinococcus radiodurans (strain ATCC 13939 / DSM 20539 / JCM 16871 / CCUG 27074 / LMG 4051 / NBRC 15346 / NCIMB 9279 / VKM B-1422 / R1).